A 462-amino-acid polypeptide reads, in one-letter code: Probable protein phosphatase 2C 1 (462 aa).

The region spanning 60-362 (SSCIFTQQGR…DDCAVVCLFL (303 aa)) is the PPM-type phosphatase domain. Positions 95, 96, 307, and 353 each coordinate Mn(2+). 2 disordered regions span residues 369–394 (ETSD…QGAE) and 421–443 (EADN…LEGV). Residues 376-385 (QCFSSATNAV) show a composition bias toward polar residues. A compositionally biased stretch (basic and acidic residues) spans 424 to 434 (NAEKEKTREGE).

This sequence belongs to the PP2C family. As to quaternary structure, interacts with GCN5. The cofactor is Mg(2+). Mn(2+) serves as cofactor.

The catalysed reaction is O-phospho-L-seryl-[protein] + H2O = L-seryl-[protein] + phosphate. It catalyses the reaction O-phospho-L-threonyl-[protein] + H2O = L-threonyl-[protein] + phosphate. In terms of biological role, may act as negative regulator of GCN5. The chain is Probable protein phosphatase 2C 1 (PPC6-6) from Arabidopsis thaliana (Mouse-ear cress).